Consider the following 232-residue polypeptide: MEEVAEEVPVVYLHDVKRQYVQGESILTILNGAKLALWAGQSVALVAPSGAGKSTLLHIAGLLEHPDEGEVYVGGTATSGLSDAERTQIRRTDIGFVYQSHRLLPEFSALENVMLPQMIRGLKRSETTERAKEILAYLGLGDRITHRPAELSGGEQQRVAIARAVANAPRVLLADEPTGNLDVHTADHVFQALMQLVRATQVAMLIATHNMELAGRMDRRVSIQDGLVVELD.

In terms of domain architecture, ABC transporter spans 11 to 231 (VYLHDVKRQY…SIQDGLVVEL (221 aa)). 47-54 (APSGAGKS) serves as a coordination point for ATP.

Belongs to the ABC transporter superfamily. Lipoprotein translocase (TC 3.A.1.125) family. In terms of assembly, the complex is composed of two ATP-binding proteins (LolD) and two transmembrane proteins (LolC and LolE).

The protein localises to the cell inner membrane. Its function is as follows. Part of the ABC transporter complex LolCDE involved in the translocation of mature outer membrane-directed lipoproteins, from the inner membrane to the periplasmic chaperone, LolA. Responsible for the formation of the LolA-lipoprotein complex in an ATP-dependent manner. This is Lipoprotein-releasing system ATP-binding protein LolD 1 from Rhodopseudomonas palustris (strain BisB18).